Here is a 145-residue protein sequence, read N- to C-terminus: uncharacterized protein (145 aa).

Residues 78–145 (KLQIVAKDRI…DVVEKISILW (68 aa)) enclose the ACT domain.

This is an uncharacterized protein from Methanocaldococcus jannaschii (strain ATCC 43067 / DSM 2661 / JAL-1 / JCM 10045 / NBRC 100440) (Methanococcus jannaschii).